Reading from the N-terminus, the 369-residue chain is Histidinol-phosphate aminotransferase (369 aa).

Position 222 is an N6-(pyridoxal phosphate)lysine (K222).

Belongs to the class-II pyridoxal-phosphate-dependent aminotransferase family. Histidinol-phosphate aminotransferase subfamily. In terms of assembly, homodimer. Pyridoxal 5'-phosphate serves as cofactor.

The catalysed reaction is L-histidinol phosphate + 2-oxoglutarate = 3-(imidazol-4-yl)-2-oxopropyl phosphate + L-glutamate. It functions in the pathway amino-acid biosynthesis; L-histidine biosynthesis; L-histidine from 5-phospho-alpha-D-ribose 1-diphosphate: step 7/9. The sequence is that of Histidinol-phosphate aminotransferase from Halalkalibacterium halodurans (strain ATCC BAA-125 / DSM 18197 / FERM 7344 / JCM 9153 / C-125) (Bacillus halodurans).